The primary structure comprises 331 residues: MDQSSSGGSMGGRLPFNQSFWEEFLMGREGHLPALPEISHVSKSVVRILGGNPGSMHLQGTNTYLVGTGRSRILIDTAQGLPVWISRISSFLYTQKIELSYVLLTHWHGDHTGGVPDLISQNSSLSNRIYKNRPDSGQNPITHGQIFSVAGATVRAILTPGHSVDHMCFLLEEENALFTGDNVLGHGFSVAQDLGRYMDSLRDMASLGCRIGYPAHGAVIEKLPGKLEEYIQHREGRERMMLSALTRQRVQGEGVREGGVKCGLTLNEIVMVIYGRLPQEVIEKALAPSLLQVLWKLTEDRMVGFKPGDPLKRQWFALEQKKRNKVRGCPS.

Zn(2+) is bound by residues H106, H108, D110, and H111. D110 acts as the Proton donor/acceptor in catalysis.

Belongs to the metallo-beta-lactamase superfamily. It depends on Zn(2+) as a cofactor.

Its pathway is secondary metabolite biosynthesis. Lactamase-like protein; part of the gene cluster that mediates the biosynthesis of neosartoricin B, a prenylated anthracenone that probably exhibits T-cell antiproliferative activity, suggestive of a physiological role as an immunosuppressive agent. The non-reducing polyketide synthase nscA probably synthesizes and cyclizes the decaketide backbone. The hydrolase nscB then mediates the product release through hydrolysis followed by spontaneous decarboxylation. The prenyltransferase nscD catalyzes the addition of the dimethylallyl group to the aromatic C5. The FAD-dependent monooxygenase nscC is then responsible for the stereospecific hydroxylation at C2. Neosartoricin B can be converted into two additional compounds neosartoricins C and D. Neosartoricin C is a spirocyclic compound that is cyclized through the attack of C3 hydroxyl on C14, followed by dehydration. On the other hand, neosartoricin D is a further cyclized compound in which attack of C2 on C14 in neosartoricin C results in the formation of the acetal-containing dioxabicyclo-octanone ring. Both of these compounds are novel and possibly represent related metabolites of the gene cluster. The protein is Lactamase-like protein nscB of Trichophyton equinum (strain ATCC MYA-4606 / CBS 127.97) (Horse ringworm fungus).